A 1647-amino-acid polypeptide reads, in one-letter code: Ras GTPase-activating-like protein IQG1 (1647 aa).

Residues 18–51 (DTTATTTTTTTSNVLQPSNRLNSPTKFNRKSLDN) form a disordered region. Residues 19–28 (TTATTTTTTT) are compositionally biased toward low complexity. The segment covering 29 to 43 (SNVLQPSNRLNSPTK) has biased composition (polar residues). The residue at position 48 (Ser48) is a Phosphoserine. Residues Thr66, Thr72, and Thr82 each carry the phosphothreonine modification. Phosphoserine is present on residues Ser83, Ser91, and Ser139. A compositionally biased stretch (polar residues) spans 143–162 (FNTQSNVHTPLKQLNQPIGT). A disordered region spans residues 143-175 (FNTQSNVHTPLKQLNQPIGTPSSSSLSPAKNAS). The span at 163–175 (PSSSSLSPAKNAS) shows a compositional bias: low complexity. Phosphoserine occurs at positions 165, 167, and 169. A Calponin-homology (CH) domain is found at 184 to 291 (LCRIEAIKQW…FCLHALSYIL (108 aa)). The interval 326–427 (PLPNFSSADT…STSNAKLELH (102 aa)) is disordered. Over residues 342–355 (TSNNNSSTTSATAA) the composition is skewed to low complexity. Thr367 bears the Phosphothreonine mark. Residues 368–379 (PSPLKRPQQLQK) show a composition bias toward low complexity. Ser369 bears the Phosphoserine mark. Basic and acidic residues-rich tracts occupy residues 380 to 392 (KQLE…KPEL) and 402 to 413 (ISRDDPFTDRVD). 2 positions are modified to phosphoserine: Ser433 and Ser440. 9 consecutive IQ domains span residues 467 to 478 (FQSLARGAVFRY), 528 to 539 (LQSIIRKNFVIN), 556 to 567 (LQSLIRGKLTRD), 586 to 597 (FQSLVRMKSIYS), 616 to 627 (LQSIARSQLYHR), 642 to 653 (IQSIIRRNAVIE), 672 to 683 (LQSIARGGVART), 734 to 745 (VQTLFRGVLSRY), and 764 to 775 (LQSVARGKLMRG). Residues 841–919 (LSDLKDLIIE…KKIELWQTLF (79 aa)) are a coiled coil. The 266-residue stretch at 958–1223 (PVRDSSITYH…DTVKSIISQA (266 aa)) folds into the Ras-GAP domain. 5 positions are modified to phosphoserine: Ser1064, Ser1068, Ser1088, Ser1383, and Ser1385.

In terms of assembly, interacts with myosin MYO1 and its light chain MLC1. Interacts with BNI1. Interacts with BNR1. Interacts with CLB2. Interacts with CLB4. Interacts with CDC28. In terms of processing, hyperphosphorylated. Phosphorylation is cell cycle-dependent and peaks at the time of cytokinesis. Contains 21 consensus sites for cyclin-dependent kinases (CDKs). At least some of them are phosphorylated by the CLB2-CDC28 kinase complex. Mutation of 15 of the phosphorylation sites to Ala caused both premature assembly and delayed disassembly of the actomyosin ring, blocked interaction with the actin-nucleating proteins BNI1 and BNR1, and resulted in defects in cytokinesis.

The protein resides in the bud neck. Functionally, required for the assembly and the contraction of the actomyosin ring at the bud neck during cytokinesis. In Candida albicans (strain SC5314 / ATCC MYA-2876) (Yeast), this protein is Ras GTPase-activating-like protein IQG1 (IQG1).